The chain runs to 156 residues: tRNA (cytidine(34)-2'-O)-methyltransferase (156 aa).

The S-adenosyl-L-methionine site is built by Gly102, Leu124, and Ser132.

Belongs to the class IV-like SAM-binding methyltransferase superfamily. RNA methyltransferase TrmH family. TrmL subfamily. In terms of assembly, homodimer.

The protein resides in the cytoplasm. The enzyme catalyses cytidine(34) in tRNA + S-adenosyl-L-methionine = 2'-O-methylcytidine(34) in tRNA + S-adenosyl-L-homocysteine + H(+). It carries out the reaction 5-carboxymethylaminomethyluridine(34) in tRNA(Leu) + S-adenosyl-L-methionine = 5-carboxymethylaminomethyl-2'-O-methyluridine(34) in tRNA(Leu) + S-adenosyl-L-homocysteine + H(+). In terms of biological role, methylates the ribose at the nucleotide 34 wobble position in the two leucyl isoacceptors tRNA(Leu)(CmAA) and tRNA(Leu)(cmnm5UmAA). Catalyzes the methyl transfer from S-adenosyl-L-methionine to the 2'-OH of the wobble nucleotide. This Burkholderia ambifaria (strain ATCC BAA-244 / DSM 16087 / CCUG 44356 / LMG 19182 / AMMD) (Burkholderia cepacia (strain AMMD)) protein is tRNA (cytidine(34)-2'-O)-methyltransferase.